The following is a 318-amino-acid chain: Large ribosomal subunit protein uL10 (318 aa).

Tyr-24 is subject to Phosphotyrosine. Phosphothreonine is present on Thr-59. Lys-264 participates in a covalent cross-link: Glycyl lysine isopeptide (Lys-Gly) (interchain with G-Cter in ubiquitin). Residue Lys-298 forms a Glycyl lysine isopeptide (Lys-Gly) (interchain with G-Cter in SUMO1); alternate linkage. A Glycyl lysine isopeptide (Lys-Gly) (interchain with G-Cter in SUMO2); alternate cross-link involves residue Lys-298. Residues 298–318 are disordered; the sequence is KVEAKEESEESDEDMGFGLFD. Residues 303 to 312 are compositionally biased toward acidic residues; the sequence is EESEESDEDM. A phosphoserine mark is found at Ser-305 and Ser-308.

It belongs to the universal ribosomal protein uL10 family. P0 forms a pentameric complex by interaction with dimers of P1 and P2. Identified in a IGF2BP1-dependent mRNP granule complex containing untranslated mRNAs. Interacts with APEX1. Interacts with FMR1 isoform 6. Ubiquitinated at Lys-264 by RNF14 and RNF25 in response to ribosome collisions (ribosome stalling).

Its subcellular location is the nucleus. The protein resides in the cytoplasm. Ribosomal protein P0 is the functional equivalent of E.coli protein L10. The sequence is that of Large ribosomal subunit protein uL10 (RPLP0) from Oryctolagus cuniculus (Rabbit).